Consider the following 397-residue polypeptide: Succinyl-diaminopimelate desuccinylase (397 aa).

His-74 contributes to the Zn(2+) binding site. Asp-76 is a catalytic residue. Asp-107 serves as a coordination point for Zn(2+). The active-site Proton acceptor is the Glu-141. Glu-142, Glu-170, and His-368 together coordinate Zn(2+).

This sequence belongs to the peptidase M20A family. DapE subfamily. As to quaternary structure, homodimer. Zn(2+) serves as cofactor. Co(2+) is required as a cofactor.

It carries out the reaction N-succinyl-(2S,6S)-2,6-diaminopimelate + H2O = (2S,6S)-2,6-diaminopimelate + succinate. The protein operates within amino-acid biosynthesis; L-lysine biosynthesis via DAP pathway; LL-2,6-diaminopimelate from (S)-tetrahydrodipicolinate (succinylase route): step 3/3. In terms of biological role, catalyzes the hydrolysis of N-succinyl-L,L-diaminopimelic acid (SDAP), forming succinate and LL-2,6-diaminopimelate (DAP), an intermediate involved in the bacterial biosynthesis of lysine and meso-diaminopimelic acid, an essential component of bacterial cell walls. The chain is Succinyl-diaminopimelate desuccinylase from Mesorhizobium japonicum (strain LMG 29417 / CECT 9101 / MAFF 303099) (Mesorhizobium loti (strain MAFF 303099)).